A 152-amino-acid polypeptide reads, in one-letter code: MSSKMIVLMSSDGQSFEVEEAVAIQSQTIAHMVEDDCVADGIPLANVESKILVKVIEYCKKHHVDEANPISEEDLNNWDEKFMDLEQSTIFELILAANYLNIKSLLDLTCQTVADMIKGKTPEEIRSTFNIENDFTPEEEEAVRKENQWAFE.

The tract at residues 94–152 (ILAANYLNIKSLLDLTCQTVADMIKGKTPEEIRSTFNIENDFTPEEEEAVRKENQWAFE) is interaction with the F-box domain of F-box proteins.

It belongs to the SKP1 family. Part of a SCF (SKP1-cullin-F-box) protein ligase complex. Interacts with ADO3/FKF1, COI1/FBL2, EBF1/FBL6, PP2A13, PP2B10, UFO, SKIP2, SKIP15, SKIP16, SKIP32, CPR1/CPR30, At1g55000, At1g67340, At1g78100, At3g04660, At3g16740, At3g61590, At4g38940 and At5g49610. In terms of tissue distribution, expressed in young seedlings, cotyledons, roots, leaves, floral stems, inflorescences, pollen, and siliques, with a slightly higher level in inflorescence than in other tissues.

It localises to the nucleus. Its pathway is protein modification; protein ubiquitination. Involved in ubiquitination and subsequent proteasomal degradation of target proteins. Together with CUL1, RBX1 and a F-box protein, it forms a SCF E3 ubiquitin ligase complex. The functional specificity of this complex depends on the type of F-box protein. In the SCF complex, it serves as an adapter that links the F-box protein to CUL1. Plays a role during early flowers reproductive development. The polypeptide is SKP1-like protein 11 (ASK11) (Arabidopsis thaliana (Mouse-ear cress)).